The following is a 236-amino-acid chain: Leucyl/phenylalanyl-tRNA--protein transferase (236 aa).

This sequence belongs to the L/F-transferase family.

Its subcellular location is the cytoplasm. The catalysed reaction is N-terminal L-lysyl-[protein] + L-leucyl-tRNA(Leu) = N-terminal L-leucyl-L-lysyl-[protein] + tRNA(Leu) + H(+). It catalyses the reaction N-terminal L-arginyl-[protein] + L-leucyl-tRNA(Leu) = N-terminal L-leucyl-L-arginyl-[protein] + tRNA(Leu) + H(+). It carries out the reaction L-phenylalanyl-tRNA(Phe) + an N-terminal L-alpha-aminoacyl-[protein] = an N-terminal L-phenylalanyl-L-alpha-aminoacyl-[protein] + tRNA(Phe). Functionally, functions in the N-end rule pathway of protein degradation where it conjugates Leu, Phe and, less efficiently, Met from aminoacyl-tRNAs to the N-termini of proteins containing an N-terminal arginine or lysine. This is Leucyl/phenylalanyl-tRNA--protein transferase from Aliivibrio salmonicida (strain LFI1238) (Vibrio salmonicida (strain LFI1238)).